Consider the following 323-residue polypeptide: tRNA U34 carboxymethyltransferase (323 aa).

Carboxy-S-adenosyl-L-methionine is bound by residues K91, W105, K110, G130, 152 to 154 (DPS), 181 to 182 (IE), M196, Y200, and R315.

Belongs to the class I-like SAM-binding methyltransferase superfamily. CmoB family. Homotetramer.

It carries out the reaction carboxy-S-adenosyl-L-methionine + 5-hydroxyuridine(34) in tRNA = 5-carboxymethoxyuridine(34) in tRNA + S-adenosyl-L-homocysteine + H(+). Functionally, catalyzes carboxymethyl transfer from carboxy-S-adenosyl-L-methionine (Cx-SAM) to 5-hydroxyuridine (ho5U) to form 5-carboxymethoxyuridine (cmo5U) at position 34 in tRNAs. In Vibrio atlanticus (strain LGP32) (Vibrio splendidus (strain Mel32)), this protein is tRNA U34 carboxymethyltransferase.